The following is a 1770-amino-acid chain: AF4/FMR2 family member lilli (1770 aa).

3 stretches are compositionally biased toward low complexity: residues 1 to 19 (MAQQ…HPHQ), 154 to 204 (LGHS…YLKQ), and 227 to 269 (PSSS…GTTP). Disordered stretches follow at residues 1–28 (MAQQ…NQLQ), 134–327 (SRHA…EKDI), 402–660 (TSLL…PGNV), 761–805 (LHSA…LQLP), 822–1173 (MQKA…KQGQ), and 1291–1390 (KHEH…QISK). A compositionally biased stretch (polar residues) spans 402-414 (TSLLTTPPHASQG). Over residues 434 to 447 (KAAAALSPTAAAKP) the composition is skewed to low complexity. Residues 448-461 (LKTEKNHTLEKQDS) are compositionally biased toward basic and acidic residues. A compositionally biased stretch (acidic residues) spans 463–474 (LENDLELSESED). Phosphoserine occurs at positions 470 and 472. Positions 483-503 (SAGNSSNSSESDSSESGSESS) are enriched in low complexity. Residues 511–520 (QHHHHNHHHQ) are compositionally biased toward basic residues. The span at 521-552 (QQQQQLQQQQQQQLLQQKQQHQQILQQQQRQL) shows a compositional bias: low complexity. Over residues 582 to 614 (FGSGGAGNGGCSTASSGGGGGGSGSGGGSGSSS) the composition is skewed to gly residues. Positions 615 to 625 (GIGTMSSGSSS) are enriched in low complexity. 2 stretches are compositionally biased toward polar residues: residues 626–638 (NKTP…NKWT) and 647–659 (ANQT…SPGN). Residues 768–800 (SDSGTSGSGSTSSSSSSSDSAPGEVVPMPGPGE) are compositionally biased toward low complexity. The segment covering 844–854 (QRQKKPRKKKP) has biased composition (basic residues). Phosphoserine occurs at positions 863 and 864. Low complexity-rich tracts occupy residues 880 to 893 (AAAA…ATAT), 909 to 928 (QQQS…SSSQ), 994 to 1028 (ANAS…SSSS), 1071 to 1081 (SGSSSPSSSSS), and 1111 to 1131 (SQHS…SSTS). A DNA-binding region (a.T hook) is located at residues 900 to 912 (KKGRGRPRKQQQS). 2 positions are modified to phosphoserine: serine 920 and serine 922. Basic and acidic residues-rich tracts occupy residues 1295 to 1312 (PHPV…ESKF) and 1321 to 1355 (FQLK…EREQ). Position 1442 is a phosphoserine (serine 1442). 2 stretches are compositionally biased toward low complexity: residues 1483-1499 (AAAT…TSTA) and 1656-1676 (GNTP…SGSN). 2 disordered regions span residues 1483–1502 (AAAT…APPA) and 1656–1683 (GNTP…GKIV).

It belongs to the AF4 family.

It is found in the nucleus. Has a role in transcriptional regulation. Acts in parallel with the Ras/MAPK and the PI3K/PKB pathways in the control of cell identity and cellular growth. Essential for regulation of the cytoskeleton and cell growth but not for cell proliferation or growth rate. Required specifically for the microtubule-based basal transport of lipid droplets. Plays a partially redundant function downstream of Raf in cell fate specification in the developing eye. Pair-rule protein that regulates embryonic cellularization, gastrulation and segmentation. This Drosophila pseudoobscura pseudoobscura (Fruit fly) protein is AF4/FMR2 family member lilli.